A 117-amino-acid polypeptide reads, in one-letter code: Galanin-like peptide (117 aa).

Positions 1–23 (MACSVHLVLFLTILLSLAETPES) are cleaved as a signal peptide. A propeptide spanning residues 86-117 (TMGETFVKANTGDMHILDKNVPKEEATLDSES) is cleaved from the precursor.

It belongs to the galanin family. In terms of tissue distribution, isoform 2 is found in brain, thymus and skin. Isoform 2 is found in the skin, in pericytes covering microvascular arterioles and venules on their abluminal surfaces. In larger vessels, isoform 2 is expressed in layers of smooth muscle cells. Isoform 2 is not detected in endothelial cells.

The protein localises to the secreted. In terms of biological role, hypothalamic neuropeptide which binds to the G-protein-coupled galanin receptors (GALR1, GALR2 and GALR3). Involved in a large number of putative physiological functions in CNS homeostatic processes, including the regulation of gonadotropin-releasing hormone secretion. Functionally, exhibits antimicrobial activity against Gram-negative bacterias, inducing bacterial membrane blebbing. Exhibits potent and dose-dependent vasoconstrictor and anti-edema activity in the cutaneous microvasculature, a physiologic effects which does not appear to be mediated via GALR1 or GALR2. The chain is Galanin-like peptide (Galp) from Mus musculus (Mouse).